The primary structure comprises 454 residues: uncharacterized protein (454 aa).

An HNH domain is found at 364–405; sequence CSRPGCDAPAYHSEVHHVTPWTTTHRTDINDLTLACGPDNRL.

Belongs to the Rv1128c/1148c/1588c/1702c/1945/3466 family.

This is an uncharacterized protein from Mycobacterium tuberculosis (strain ATCC 25618 / H37Rv).